Here is a 234-residue protein sequence, read N- to C-terminus: Enolase-phosphatase E1 (234 aa).

Residues Asp10 and Glu12 each contribute to the Mg(2+) site. Residues 125 to 126 (SS) and Lys162 contribute to the substrate site. Asp188 contributes to the Mg(2+) binding site.

This sequence belongs to the HAD-like hydrolase superfamily. MasA/MtnC family. Monomer. Mg(2+) serves as cofactor.

It localises to the cytoplasm. The protein localises to the nucleus. It carries out the reaction 5-methylsulfanyl-2,3-dioxopentyl phosphate + H2O = 1,2-dihydroxy-5-(methylsulfanyl)pent-1-en-3-one + phosphate. Its pathway is amino-acid biosynthesis; L-methionine biosynthesis via salvage pathway; L-methionine from S-methyl-5-thio-alpha-D-ribose 1-phosphate: step 3/6. It functions in the pathway amino-acid biosynthesis; L-methionine biosynthesis via salvage pathway; L-methionine from S-methyl-5-thio-alpha-D-ribose 1-phosphate: step 4/6. Functionally, bifunctional enzyme that catalyzes the enolization of 2,3-diketo-5-methylthiopentyl-1-phosphate (DK-MTP-1-P) into the intermediate 2-hydroxy-3-keto-5-methylthiopentenyl-1-phosphate (HK-MTPenyl-1-P), which is then dephosphorylated to form the acireductone 1,2-dihydroxy-3-keto-5-methylthiopentene (DHK-MTPene). This chain is Enolase-phosphatase E1 (utr4), found in Neurospora crassa (strain ATCC 24698 / 74-OR23-1A / CBS 708.71 / DSM 1257 / FGSC 987).